Consider the following 332-residue polypeptide: Ribosomal RNA small subunit methyltransferase C (332 aa).

This sequence belongs to the methyltransferase superfamily. RsmC family. In terms of assembly, monomer.

Its subcellular location is the cytoplasm. The catalysed reaction is guanosine(1207) in 16S rRNA + S-adenosyl-L-methionine = N(2)-methylguanosine(1207) in 16S rRNA + S-adenosyl-L-homocysteine + H(+). Specifically methylates the guanine in position 1207 of 16S rRNA in the 30S particle. In Pseudomonas aeruginosa (strain UCBPP-PA14), this protein is Ribosomal RNA small subunit methyltransferase C.